A 1285-amino-acid polypeptide reads, in one-letter code: Ataxin-2 (1285 aa).

Disordered regions lie at residues 1–85 (MRSS…PGSR), 111–178 (ARAC…SPGA), and 197–224 (PVASSSAAAGGGRPGLGRGRNSSKGLPQ). Over residues 29–38 (SLPRTARRGG) the composition is skewed to basic residues. Positions 48-65 (AGPPPRGPGAPPRGPRSP) are enriched in pro residues. The segment covering 128–144 (SSSARPAPGCPRPACEP) has biased composition (low complexity). Residues 205-214 (AGGGRPGLGR) show a composition bias toward gly residues. Phosphoserine is present on residues Ser218 and Ser219. The 78-residue stretch at 237–314 (RMVHILTSVV…FVVVQFKDTD (78 aa)) folds into the Sm domain. Residues Ser362 and Ser435 each carry the phosphoserine modification. Composition is skewed to basic and acidic residues over residues 428-440 (ALENDDRSEEEKY) and 447-461 (CSDREGHGPNTRDNK). 2 disordered regions span residues 428–925 (ALEN…HQQP) and 1111–1191 (AALH…QSSF). At Ser477 the chain carries Phosphoserine. The span at 498–510 (ASHTSDFNPNAGS) shows a compositional bias: polar residues. Ser523 is subject to Phosphoserine. Over residues 526–552 (PSHSSRPPSRYQSGPNSLPPRAATHTR) the composition is skewed to low complexity. The span at 554-567 (PSRPPSRPSRPPSH) shows a compositional bias: pro residues. Ser593 is modified (phosphoserine). The segment covering 596–606 (AQRHPRNHRVS) has biased composition (basic residues). Arg609 carries the asymmetric dimethylarginine; alternate modification. At Arg609 the chain carries Omega-N-methylarginine; alternate. Ser611 and Ser653 each carry phosphoserine. The span at 662–672 (PRQSSIGNSPS) shows a compositional bias: polar residues. The span at 685 to 694 (PAEAVSMPVP) shows a compositional bias: low complexity. A Phosphoserine modification is found at Ser697. Phosphothreonine is present on Thr710. The segment covering 737–746 (ASETSPSFSK) has biased composition (polar residues). Ser741 and Ser753 each carry phosphoserine. Over residues 757 to 773 (SEHRKQIDDLKKFKNDF) the composition is skewed to basic and acidic residues. The span at 776-789 (QPSSTSESMDQLLS) shows a compositional bias: polar residues. Positions 790-813 (KNREGEKSRDLIKDKTEASAKDSF) are enriched in basic and acidic residues. A compositionally biased stretch (low complexity) spans 814–838 (IDSSSSSSNCTSGSSKTNSPSISPS). A phosphoserine mark is found at Ser827, Ser828, Ser832, Ser836, Ser838, Ser859, and Ser860. The span at 851–862 (VTSQGVQTSSPA) shows a compositional bias: polar residues. Residue Lys864 forms a Glycyl lysine isopeptide (Lys-Gly) (interchain with G-Cter in SUMO2) linkage. Positions 864 to 881 (KQEKDDREEKKDTTEQVR) are enriched in basic and acidic residues. Composition is skewed to low complexity over residues 896-907 (SFSQPKPSTTPT) and 1128-1165 (GQQQSQHGGSHPAPSPVQHHQHQAAQALHLASPQQQSA).

Belongs to the ataxin-2 family. As to quaternary structure, interacts with RBFOX1. Monomer. Can also form homodimers. Interacts with polyribosomes. Interacts with EGFR. Interacts with SH3GL3. Interacts with SH3GL2, SH3KBP1 and CBL. Interacts with ATXN2L. Expressed in the heart, lung, liver, kidney, skeletal muscle, spleen and intestine. Predominant expression was seen in the brain where a high level expression was found in the pyramidal cortical neurons, large brain stem neurons and cerebellar Purkinje cells. All three isoforms were found in all the tissues except skeletal muscle where only isoform 1 was found.

It localises to the cytoplasm. Functionally, involved in EGFR trafficking, acting as negative regulator of endocytic EGFR internalization at the plasma membrane. This Mus musculus (Mouse) protein is Ataxin-2 (Atxn2).